A 307-amino-acid chain; its full sequence is Transmembrane and coiled-coil domain-containing protein 5B (307 aa).

Residues 17 to 207 (FASSLEAVKQ…LEKQISKAQD (191 aa)) adopt a coiled-coil conformation. The helical transmembrane segment at 243-265 (YFQYLTFMVLVFIRLLAYVIFHL) threads the bilayer.

This sequence belongs to the TMCO5 family.

It is found in the membrane. In Homo sapiens (Human), this protein is Transmembrane and coiled-coil domain-containing protein 5B (TMCO5B).